The primary structure comprises 250 residues: DNA repair protein RecO (250 aa).

It belongs to the RecO family.

Involved in DNA repair and RecF pathway recombination. The polypeptide is DNA repair protein RecO (Rhodospirillum centenum (strain ATCC 51521 / SW)).